The following is a 312-amino-acid chain: Aspartate carbamoyltransferase catalytic subunit (312 aa).

Residues Arg58 and Thr59 each contribute to the carbamoyl phosphate site. Lys86 lines the L-aspartate pocket. Positions 108, 136, and 139 each coordinate carbamoyl phosphate. L-aspartate is bound by residues Arg169 and Arg223. Residues Gly264 and Pro265 each coordinate carbamoyl phosphate.

This sequence belongs to the aspartate/ornithine carbamoyltransferase superfamily. ATCase family. As to quaternary structure, heterododecamer (2C3:3R2) of six catalytic PyrB chains organized as two trimers (C3), and six regulatory PyrI chains organized as three dimers (R2).

The enzyme catalyses carbamoyl phosphate + L-aspartate = N-carbamoyl-L-aspartate + phosphate + H(+). The protein operates within pyrimidine metabolism; UMP biosynthesis via de novo pathway; (S)-dihydroorotate from bicarbonate: step 2/3. Its function is as follows. Catalyzes the condensation of carbamoyl phosphate and aspartate to form carbamoyl aspartate and inorganic phosphate, the committed step in the de novo pyrimidine nucleotide biosynthesis pathway. The sequence is that of Aspartate carbamoyltransferase catalytic subunit from Acetivibrio thermocellus (strain ATCC 27405 / DSM 1237 / JCM 9322 / NBRC 103400 / NCIMB 10682 / NRRL B-4536 / VPI 7372) (Clostridium thermocellum).